Consider the following 468-residue polypeptide: MTKTLPKDFIFGGATAAYQAEGATKTDGKGPVAWDKYLEDNYWYTAEPASDFYNRYPVDLKLAEEYNVNGIRISIAWSRVFPTGYGEVNRKGVEYYHNLFAECHKRGVEPFVTLHHFDTPEALHSNGDFLNRDNIDHFVAYAAFCFEEFPEVNYWTTFNEIGPIGDGQYLVGKFPPGIQYDLAKVFQSHHNMMVSHARAVKLYKDKGYKGEIGVVHALPTKYPYDPANPDDVRAAELEDIIHNKFILDATYLGRYSEKTMEGVQHILAANGGELDLREEDFSILEAAKDLNDFLGINYYMSDWMQAFDGETEIIHNGKGEKGSSKYQIKGVGRREAPVNVPKTDWDWIIYPQGLYDQIMRVKADYPNYKKIYITENGLGYKDEFVDGTVYDDGRIDYVKKHLEVISDAISDGANVKGYFIWSLMDVFSWSNGYEKRYGLFYVDFETQERYPKKSAHWYKKVAETQVID.

The D-galactose 6-phosphate site is built by Q19, H116, N159, E160, and N297. E160 functions as the Proton donor in the catalytic mechanism. The active-site Nucleophile is E375. D-galactose 6-phosphate contacts are provided by S428, W429, K435, and Y437.

The protein belongs to the glycosyl hydrolase 1 family.

The enzyme catalyses a 6-phospho-beta-D-galactoside + H2O = D-galactose 6-phosphate + an alcohol. Its pathway is carbohydrate metabolism; lactose degradation; D-galactose 6-phosphate and beta-D-glucose from lactose 6-phosphate: step 1/1. In Streptococcus uberis (strain ATCC BAA-854 / 0140J), this protein is 6-phospho-beta-galactosidase.